The following is a 140-amino-acid chain: Nucleoside diphosphate kinase (140 aa).

6 residues coordinate ATP: Lys-11, Phe-59, Arg-87, Thr-93, Arg-104, and Asn-114. His-117 functions as the Pros-phosphohistidine intermediate in the catalytic mechanism.

Belongs to the NDK family. As to quaternary structure, homotetramer. Mg(2+) serves as cofactor.

It is found in the cytoplasm. The catalysed reaction is a 2'-deoxyribonucleoside 5'-diphosphate + ATP = a 2'-deoxyribonucleoside 5'-triphosphate + ADP. It carries out the reaction a ribonucleoside 5'-diphosphate + ATP = a ribonucleoside 5'-triphosphate + ADP. In terms of biological role, major role in the synthesis of nucleoside triphosphates other than ATP. The ATP gamma phosphate is transferred to the NDP beta phosphate via a ping-pong mechanism, using a phosphorylated active-site intermediate. The sequence is that of Nucleoside diphosphate kinase from Hyphomonas neptunium (strain ATCC 15444).